We begin with the raw amino-acid sequence, 599 residues long: Tryptophan 2-C-methyltransferase (599 aa).

The B12-binding domain occupies 4 to 149 (KGTVALINPN…RALAEGRSAD (146 aa)). The interval 167 to 197 (RVAPPALDPRAAPAPSSSPSPSPAPSSSSAP) is disordered. Over residues 168-181 (VAPPALDPRAAPAP) the composition is skewed to low complexity. A Radical SAM core domain is found at 239–492 (YREGGLGSIL…IEYERQFMFD (254 aa)). Residues C253, C257, and C260 each coordinate [4Fe-4S] cluster.

[4Fe-4S] cluster serves as cofactor. The cofactor is cob(II)alamin.

It catalyses the reaction L-tryptophan + S-adenosyl-L-methionine = 2-methyl-L-tryptophan + S-adenosyl-L-homocysteine + H(+). Involved in the biosynthetic pathway of the antibiotic thiostrepton A. First, TsrM catalyzes the transfer of a methyl group from S-adenosyl methionine (SAM) to cobalamin, leading to the formation of methylcobalamin (CH3-cobalamin) and S-adenosyl-L-homocysteine (SAH). Then the methyl group is transferred to the C2 position of tryptophan (Trp) with the concerted action of the radical SAM [4Fe-4S] center, leading to the production of methyltryptophan. The sequence is that of Tryptophan 2-C-methyltransferase from Streptomyces laurentii.